The chain runs to 861 residues: ToMV resistance protein Tm-2(2) (861 aa).

Residues 63 to 83 (VKNLLKDIQELAGDVEDLLDD) adopt a coiled-coil conformation. An NB-ARC domain is found at 162–388 (DDFNMLQAKL…LESMGHKVQD (227 aa)). 185–192 (GMPGLGKT) is a binding site for ATP. 13 LRR repeats span residues 225 to 248 (LDIA…NLRS), 305 to 327 (LHAL…IFNF), 388 to 411 (DGCA…CFLY), 449 to 472 (LAED…TYNG), 510 to 536 (VARL…KLEK), 585 to 608 (MTCL…IVKL), 609 to 631 (TRLE…VWES), 652 to 680 (ISSF…FFEP), 689 to 710 (LRKL…IFSP), 712 to 735 (LKAL…LSSY), 736 to 758 (PHIA…SFPP), 784 to 810 (LRKL…GYSF), and 811 to 835 (PQLE…DVSM).

Belongs to the disease resistance NB-LRR family. In terms of assembly, (Microbial infection) Interacts with tobamoviruses mouvement protein (e.g. tobacco mosaic virus (TMV) MP, AC P03583) at the plasma membrane; this interaction triggers defense responses leading to programmed cell death. As to quaternary structure, binds to HSP90 proteins (e.g. HSP90-1 and Nicotiana benthamiana HSP90-1); this interaction seems required for defense responses toward tobamoviruses.

The protein localises to the cell membrane. Functionally, inhibitor of viral mouvements which confers resistance to some tobamoviruses including tomato mosaic virus (ToMV) (e.g. strains L, B7 and ToMV1-2) and tobacco mosaic virus (TMV), but not to resistance-breaking isolates (e.g. LIIA and ToMV2(2)) ToMV and tomato brown rugose fruit virus (ToBRFV). Elicits a hypersensitive reaction in response to avirulent (Avr) movement proteins from resistance inducing tobamoviruses (e.g. ToMV and TMV) strains, thus leading to programmed cell death; this local extreme resistance requires rbcS. The protein is ToMV resistance protein Tm-2(2) of Solanum lycopersicum (Tomato).